Reading from the N-terminus, the 142-residue chain is Hemoglobin subunit alpha-A (142 aa).

Residues 2-142 (VLSAADKNNV…VGTVLTAKYR (141 aa)) form the Globin domain. O2 is bound at residue H59. H88 contributes to the heme b binding site.

Belongs to the globin family. As to quaternary structure, heterotetramer of two alpha chains and two beta chains. Red blood cells.

Involved in oxygen transport from the lung to the various peripheral tissues. The protein is Hemoglobin subunit alpha-A (HBAA) of Gallus gallus (Chicken).